Consider the following 550-residue polypeptide: M-phase inducer phosphatase 1-B (550 aa).

2 disordered regions span residues 76–98 (NLGD…GKVE) and 285–335 (SPSM…QRRG). Over residues 290–310 (EKLDRPMLKRPVRPLDSETPV) the composition is skewed to basic and acidic residues. The span at 322–335 (LQPQEENFQPQRRG) shows a compositional bias: polar residues. In terms of domain architecture, Rhodanese spans 401–508 (LVEKIFIIDC…FFPEYKELCE (108 aa)). The active site involves C457.

It belongs to the MPI phosphatase family.

It catalyses the reaction O-phospho-L-tyrosyl-[protein] + H2O = L-tyrosyl-[protein] + phosphate. Its function is as follows. Tyrosine protein phosphatase which functions as a dosage-dependent inducer of mitotic progression. Directly dephosphorylates CDK1 and stimulates its kinase activity. The sequence is that of M-phase inducer phosphatase 1-B (cdc25-1-b) from Xenopus laevis (African clawed frog).